The chain runs to 560 residues: DNA ligase B (560 aa).

K124 serves as the catalytic N6-AMP-lysine intermediate.

This sequence belongs to the NAD-dependent DNA ligase family. LigB subfamily.

It catalyses the reaction NAD(+) + (deoxyribonucleotide)n-3'-hydroxyl + 5'-phospho-(deoxyribonucleotide)m = (deoxyribonucleotide)n+m + AMP + beta-nicotinamide D-nucleotide.. Catalyzes the formation of phosphodiester linkages between 5'-phosphoryl and 3'-hydroxyl groups in double-stranded DNA using NAD as a coenzyme and as the energy source for the reaction. In Escherichia coli O6:H1 (strain CFT073 / ATCC 700928 / UPEC), this protein is DNA ligase B.